We begin with the raw amino-acid sequence, 166 residues long: Small ribosomal subunit protein uS5 (166 aa).

One can recognise an S5 DRBM domain in the interval 11–74; that stretch reads LEDRVVAINR…DAARKNLIEV (64 aa).

The protein belongs to the universal ribosomal protein uS5 family. In terms of assembly, part of the 30S ribosomal subunit. Contacts proteins S4 and S8.

With S4 and S12 plays an important role in translational accuracy. Functionally, located at the back of the 30S subunit body where it stabilizes the conformation of the head with respect to the body. This chain is Small ribosomal subunit protein uS5, found in Ligilactobacillus salivarius (strain UCC118) (Lactobacillus salivarius).